The chain runs to 180 residues: DNA-directed RNA polymerase subunit Rpo7 (180 aa).

An S1 motif domain is found at 82–165 (QEVVEGEVLQ…RLPRIALTMR (84 aa)).

The protein belongs to the eukaryotic RPB7/RPC8 RNA polymerase subunit family. In terms of assembly, part of the 13-subunit RNA polymerase complex. Forms a stalk with Rpo4 that extends from the main structure.

It is found in the cytoplasm. It carries out the reaction RNA(n) + a ribonucleoside 5'-triphosphate = RNA(n+1) + diphosphate. Functionally, DNA-dependent RNA polymerase (RNAP) catalyzes the transcription of DNA into RNA using the four ribonucleoside triphosphates as substrates. The protein is DNA-directed RNA polymerase subunit Rpo7 of Saccharolobus solfataricus (strain ATCC 35092 / DSM 1617 / JCM 11322 / P2) (Sulfolobus solfataricus).